The chain runs to 178 residues: 5,6,7,8-tetrahydromethanopterin hydro-lyase (178 aa).

H33 (proton donor) is an active-site residue. Residues D35, L64, K82, T84, and Q99 each contribute to the substrate site.

Belongs to the formaldehyde-activating enzyme family.

It is found in the cytoplasm. It carries out the reaction 5,6,7,8-tetrahydromethanopterin + formaldehyde = 5,10-methylenetetrahydromethanopterin + H2O. Catalyzes the condensation of formaldehyde with tetrahydromethanopterin (H(4)MPT) to 5,10-methylenetetrahydromethanopterin. This chain is 5,6,7,8-tetrahydromethanopterin hydro-lyase (faeA), found in Methanosarcina barkeri (strain Fusaro / DSM 804).